The following is a 424-amino-acid chain: Enolase (424 aa).

Q164 lines the (2R)-2-phosphoglycerate pocket. E206 (proton donor) is an active-site residue. Mg(2+) contacts are provided by D243, E284, and D311. The (2R)-2-phosphoglycerate site is built by K336, R365, S366, and K387. Catalysis depends on K336, which acts as the Proton acceptor.

The protein belongs to the enolase family. The cofactor is Mg(2+).

The protein resides in the cytoplasm. The protein localises to the secreted. It is found in the cell surface. It carries out the reaction (2R)-2-phosphoglycerate = phosphoenolpyruvate + H2O. It functions in the pathway carbohydrate degradation; glycolysis; pyruvate from D-glyceraldehyde 3-phosphate: step 4/5. In terms of biological role, catalyzes the reversible conversion of 2-phosphoglycerate (2-PG) into phosphoenolpyruvate (PEP). It is essential for the degradation of carbohydrates via glycolysis. This chain is Enolase, found in Wolbachia sp. subsp. Drosophila simulans (strain wRi).